Here is a 766-residue protein sequence, read N- to C-terminus: 5-methyltetrahydropteroyltriglutamate--homocysteine methyltransferase (766 aa).

5-methyltetrahydropteroyltri-L-glutamate-binding positions include 16–19 (RELK) and K119. L-homocysteine is bound by residues 440–442 (IGS) and E493. L-methionine is bound by residues 440–442 (IGS) and E493. 5-methyltetrahydropteroyltri-L-glutamate is bound by residues 524–525 (RC) and W570. D608 contacts L-homocysteine. Residue D608 coordinates L-methionine. Residue E614 coordinates 5-methyltetrahydropteroyltri-L-glutamate. Zn(2+) contacts are provided by H650, C652, and E674. H703 functions as the Proton donor in the catalytic mechanism. C735 serves as a coordination point for Zn(2+).

It belongs to the vitamin-B12 independent methionine synthase family. It depends on Zn(2+) as a cofactor.

The enzyme catalyses 5-methyltetrahydropteroyltri-L-glutamate + L-homocysteine = tetrahydropteroyltri-L-glutamate + L-methionine. It functions in the pathway amino-acid biosynthesis; L-methionine biosynthesis via de novo pathway; L-methionine from L-homocysteine (MetE route): step 1/1. In terms of biological role, catalyzes the transfer of a methyl group from 5-methyltetrahydrofolate to homocysteine resulting in methionine formation. In Pseudomonas aeruginosa (strain UCBPP-PA14), this protein is 5-methyltetrahydropteroyltriglutamate--homocysteine methyltransferase.